A 428-amino-acid polypeptide reads, in one-letter code: Anaerobic glycerol-3-phosphate dehydrogenase subunit B (428 aa).

This sequence belongs to the anaerobic G-3-P dehydrogenase subunit B family. Composed of a catalytic GlpA/B dimer and of membrane bound GlpC. FMN serves as cofactor.

The catalysed reaction is a quinone + sn-glycerol 3-phosphate = dihydroxyacetone phosphate + a quinol. Its pathway is polyol metabolism; glycerol degradation via glycerol kinase pathway; glycerone phosphate from sn-glycerol 3-phosphate (anaerobic route): step 1/1. In terms of biological role, conversion of glycerol 3-phosphate to dihydroxyacetone. Uses fumarate or nitrate as electron acceptor. The polypeptide is Anaerobic glycerol-3-phosphate dehydrogenase subunit B (Pasteurella multocida (strain Pm70)).